The primary structure comprises 182 residues: Pyruvoyl-dependent arginine decarboxylase (182 aa).

Position 44 is a pyruvic acid (Ser) (Ser-44).

It belongs to the PdaD family. The cofactor is pyruvate.

The catalysed reaction is L-arginine + H(+) = agmatine + CO2. This is Pyruvoyl-dependent arginine decarboxylase from Picrophilus torridus (strain ATCC 700027 / DSM 9790 / JCM 10055 / NBRC 100828 / KAW 2/3).